A 356-amino-acid polypeptide reads, in one-letter code: Putative methylthioribose-1-phosphate isomerase (356 aa).

Residues 57 to 59 (RGA), Arg100, and Gln206 contribute to the substrate site. Asp247 (proton donor) is an active-site residue. Residue 257 to 258 (NK) coordinates substrate.

It belongs to the eIF-2B alpha/beta/delta subunits family. MtnA subfamily.

It carries out the reaction 5-(methylsulfanyl)-alpha-D-ribose 1-phosphate = 5-(methylsulfanyl)-D-ribulose 1-phosphate. Functionally, catalyzes the interconversion of methylthioribose-1-phosphate (MTR-1-P) into methylthioribulose-1-phosphate (MTRu-1-P). In Pyrococcus abyssi (strain GE5 / Orsay), this protein is Putative methylthioribose-1-phosphate isomerase (aIF-2BI).